The sequence spans 138 residues: Vesicle transport protein GOT1B (138 aa).

Methionine 1 carries the post-translational modification N-acetylmethionine. Over 1-9 the chain is Cytoplasmic; it reads MISLTDTQK. A helical transmembrane segment spans residues 10–30; the sequence is IGMGLTGFGVFFLFFGMILFF. Over 31–32 the chain is Lumenal; it reads DK. The chain crosses the membrane as a helical span at residues 33-53; sequence ALLAIGNVLFVAGLAFVIGLE. Residues 54 to 68 are Cytoplasmic-facing; the sequence is RTFRFFFQKHKMKAT. Residues 69–89 form a helical membrane-spanning segment; the sequence is GFFLGGVFVVLIGWPLIGMIF. Position 90 (glutamate 90) is a topological domain, lumenal. The chain crosses the membrane as a helical span at residues 91–109; it reads IYGFFLLFRGFFPVVVGFI. Residues 110 to 138 lie on the Cytoplasmic side of the membrane; sequence RRVPVLGSLLNLPGIRSFVDKVGESNNMV.

The protein belongs to the GOT1 family.

The protein resides in the golgi apparatus membrane. Its function is as follows. May be involved in fusion of ER-derived transport vesicles with the Golgi complex. In Bos taurus (Bovine), this protein is Vesicle transport protein GOT1B.